The following is a 552-amino-acid chain: Formate--tetrahydrofolate ligase (552 aa).

62–69 (TPAGEGKS) lines the ATP pocket.

The protein belongs to the formate--tetrahydrofolate ligase family.

The enzyme catalyses (6S)-5,6,7,8-tetrahydrofolate + formate + ATP = (6R)-10-formyltetrahydrofolate + ADP + phosphate. It functions in the pathway one-carbon metabolism; tetrahydrofolate interconversion. The protein is Formate--tetrahydrofolate ligase of Ligilactobacillus salivarius (strain UCC118) (Lactobacillus salivarius).